The sequence spans 710 residues: MLSFQYPDVYRDETSVQDYHGHKICDPYAWLEDPDSEQTKAFVEAQNKITVPFLEQCPIRGLYKERMTELYDYPKYSCHFKKGKRYFYFYNTGLQNQRVLYVQDSLEGEARVFLDPNTLSDDGTVALRGYAFSEDGEYFAYGLSASGSDWVTIKFMKVDGAKELPDVLERVKFTCMAWTHDGKGMFYNSYPQQDGKSDGTETSTNLHQKLCYHVLGTDQSEDVLCAEFPDEPKWMGGAELSDDGRYVLLSIWEGCDPVNRLWYCDLQQGSNGINGILKWVKLIDNFEGEYDYITNEGTVFTFKTNRNSPNYRLINIDFTDPDESKWKVLVPEHEKDVLEWVACVRSNFLVLCYLRNVKNILQLHDLTTGALLKTFPLDVGSVVGYSGRKKDSEIFYQFTSFLSPGVIYHCDLTREELEPRVFREVTVKGIDASDYQTIQVFYPSKDGTKIPMFIVHKKGIKLDGSHPAFLYGYGGFNISITPNYSVSRLIFVRHMGGVLAVANIRGGGEYGETWHKGGILANKQNCFDDFQCAAEYLIKEGYTTSKRLTINGGSNGGLLVAACANQRPDLFGCVIAQVGVMDMLKFHKFTIGHAWTTDYGCSDSKQHFEWLLKYSPLHNVKLPEADDIQYPSMLLLTADHDDRVVPLHSLKFIATLQYIVGRSRKQSNPLLIHVDTKAGHGPGKPTAKVIEEVSDMFAFIARCLNIEWIQ.

Position 1 is an N-acetylmethionine (Met1). Lys157 bears the N6-acetyllysine mark. Residues Ser554, Asp641, and His680 each act as charge relay system in the active site.

It belongs to the peptidase S9A family. Expressed in all tissues tested: uterus, kidney, heart, lung, small intestine, smooth muscle, liver, spleen, thymus, adrenal, pituitary and whole brain.

The protein resides in the cytoplasm. The enzyme catalyses Hydrolysis of Pro-|-Xaa &gt;&gt; Ala-|-Xaa in oligopeptides.. With respect to regulation, inhibited by DFP, Z-Pro-prolinal and poststatin, but not by PMSF, SBTI, EDTA, leupeptin, E-64 and pepstatin. In terms of biological role, cleaves peptide bonds on the C-terminal side of prolyl residues within peptides that are up to approximately 30 amino acids long. Has high activity on the succinyl- (suc-) peptide-4-methylcoumaryl-7-amide (MCA) substrates suc-Gly-Pro-Leu-Gly-Pro-MCA, suc-Gly-Pro-MCA and suc-Ala-Ala-Ala-MCA. The protein is Prolyl endopeptidase of Rattus norvegicus (Rat).